A 471-amino-acid chain; its full sequence is Ribonuclease 3 (471 aa).

The span at 1 to 10 (MGSKVAGKKK) shows a compositional bias: basic residues. Disordered stretches follow at residues 1–29 (MGSKVAGKKKTQNDNKLDNENGSQQRENI) and 168–189 (NLNEKEDEEEDEGEDSYDPTKA). Residues 20 to 29 (ENGSQQRENI) are compositionally biased toward polar residues. Over residues 172 to 184 (KEDEEEDEGEDSY) the composition is skewed to acidic residues. Residues 227 to 331 (LSGSEMINAH…YIGGLMEDDP (105 aa)) enclose the RNase III domain. A DRBM domain is found at 369 to 437 (NAKRQLYSLI…AENALRDKKM (69 aa)). Residues 451–471 (SESVLKDPSQKNKKRKFSDTS) form a disordered region. The segment covering 461–471 (KNKKRKFSDTS) has biased composition (basic residues).

The enzyme catalyses Endonucleolytic cleavage to 5'-phosphomonoester.. DsRNA-specific nuclease that cleaves eukaryotic pre-ribosomal RNA at the U3 snoRNP-dependent A0 site in the 5'-external transcribed spacer (ETS) and in the 3'-ETS. In vitro, cleaves synthetic 5'-ETS RNA A0 site in the absence of snoRNA or other factors. Has an essential growth function in addition to pre-rRNA processing. This chain is Ribonuclease 3 (RNT1), found in Saccharomyces cerevisiae (strain ATCC 204508 / S288c) (Baker's yeast).